A 212-amino-acid chain; its full sequence is FMN-dependent NADH:quinone oxidoreductase (212 aa).

Residues serine 9, 15–17, and 138–141 contribute to the FMN site; these read SVS and TRGG.

This sequence belongs to the azoreductase type 1 family. Homodimer. It depends on FMN as a cofactor.

It catalyses the reaction 2 a quinone + NADH + H(+) = 2 a 1,4-benzosemiquinone + NAD(+). The enzyme catalyses N,N-dimethyl-1,4-phenylenediamine + anthranilate + 2 NAD(+) = 2-(4-dimethylaminophenyl)diazenylbenzoate + 2 NADH + 2 H(+). Functionally, quinone reductase that provides resistance to thiol-specific stress caused by electrophilic quinones. In terms of biological role, also exhibits azoreductase activity. Catalyzes the reductive cleavage of the azo bond in aromatic azo compounds to the corresponding amines. The polypeptide is FMN-dependent NADH:quinone oxidoreductase (Delftia acidovorans (strain DSM 14801 / SPH-1)).